Reading from the N-terminus, the 717-residue chain is RNA helicase NPH-II (717 aa).

Residues 193–384 enclose the Helicase ATP-binding domain; it reads FEIFISKKNC…IYFKNIVEIY (192 aa). Position 206 to 213 (206 to 213) interacts with ATP; that stretch reads GGTGIGKT. The DEXH box motif lies at 331 to 334; the sequence is DEIH. The region spanning 406 to 566 is the Helicase C-terminal domain; it reads ILKNYMPSVG…VFKYNNMDYY (161 aa).

This sequence belongs to the DEAD box helicase family. DEAH subfamily. As to quaternary structure, monomer.

The protein localises to the virion. It carries out the reaction ATP + H2O = ADP + phosphate + H(+). Functionally, NTP-dependent helicase that catalyzes unidirectional unwinding of 3'tailed duplex RNAs and plays an important role during transcription of early mRNAs, presumably by preventing R-loop formation behind the elongating RNA polymerase. Might also play a role in the export of newly synthesized mRNA chains out of the core into the cytoplasm. Required for replication and propagation of viral particles. The polypeptide is RNA helicase NPH-II (NPH2) (Melanoplus sanguinipes (Migratory grasshopper)).